A 29-amino-acid polypeptide reads, in one-letter code: Myosin heavy chain, muscle (29 aa).

The span at 1-16 (SKYESEGVARSEELQE) shows a compositional bias: basic and acidic residues. The interval 1-29 (SKYESEGVARSEELQEVHQAFADAGRKPI) is disordered.

Muscle myosin is a hexameric protein that consists of 2 heavy chain subunits (MHC), 2 alkali light chain subunits (MLC) and 2 regulatory light chain subunits (MLC-2).

It localises to the cytoplasm. Its subcellular location is the myofibril. Functionally, muscle contraction. This is Myosin heavy chain, muscle from Bombyx mori (Silk moth).